A 409-amino-acid polypeptide reads, in one-letter code: MKTYLVGGAVRDELLGLPVRERDWVVVGATAAQMLDLGYRQVGRDFPVFLHPETHEEHALARTERKTAPGYRGFVVHAEPDVTLEEDLLRRDLTINAMARDEAGGLIDPFNGRADLEARLLRHVSPAFAEDPVRILRVARFAARFAHLGFRVADETRALMRRMVAAGEVDALVPERVWQEMERALGEGSPATFFEVLRDCGALAVLFPEIERLFGVPQPPKYHPEIDTGVHTLMVLTQAARLSADATIRFAALTHDLGKGTTPADILPSHHGHEQRSVDLVHALCDRFRIPNAYRDLAVMVARWHGYSHRALELRPDTVLKALEGLDAFRRPERFEPFLLACEADYRGRTGFEDRPYPQADYLRAAHARCLAISAKDLVNEGLTGKAIGEALHARRVQALKQLKAEWGG.

Residues G8 and R11 each contribute to the ATP site. G8 and R11 together coordinate CTP. Mg(2+) is bound by residues E21 and D23. ATP-binding residues include R91, R137, and R140. CTP contacts are provided by R91, R137, and R140. Residues 228-329 (TGVHTLMVLT…LKALEGLDAF (102 aa)) enclose the HD domain.

Belongs to the tRNA nucleotidyltransferase/poly(A) polymerase family. Bacterial CCA-adding enzyme type 1 subfamily. Monomer. Can also form homodimers and oligomers. Requires Mg(2+) as cofactor. Ni(2+) serves as cofactor.

The catalysed reaction is a tRNA precursor + 2 CTP + ATP = a tRNA with a 3' CCA end + 3 diphosphate. It carries out the reaction a tRNA with a 3' CCA end + 2 CTP + ATP = a tRNA with a 3' CCACCA end + 3 diphosphate. In terms of biological role, catalyzes the addition and repair of the essential 3'-terminal CCA sequence in tRNAs without using a nucleic acid template. Adds these three nucleotides in the order of C, C, and A to the tRNA nucleotide-73, using CTP and ATP as substrates and producing inorganic pyrophosphate. tRNA 3'-terminal CCA addition is required both for tRNA processing and repair. Also involved in tRNA surveillance by mediating tandem CCA addition to generate a CCACCA at the 3' terminus of unstable tRNAs. While stable tRNAs receive only 3'-terminal CCA, unstable tRNAs are marked with CCACCA and rapidly degraded. This is Multifunctional CCA protein from Thioalkalivibrio sulfidiphilus (strain HL-EbGR7).